Reading from the N-terminus, the 472-residue chain is Argininosuccinate lyase (472 aa).

Belongs to the lyase 1 family. Argininosuccinate lyase subfamily.

It is found in the cytoplasm. It carries out the reaction 2-(N(omega)-L-arginino)succinate = fumarate + L-arginine. It participates in amino-acid biosynthesis; L-arginine biosynthesis; L-arginine from L-ornithine and carbamoyl phosphate: step 3/3. In Synechococcus sp. (strain CC9605), this protein is Argininosuccinate lyase.